The sequence spans 478 residues: Sulfate adenylyltransferase subunit 1 (478 aa).

In terms of domain architecture, tr-type G spans 24-240; it reads KSLLRFLTCG…VLENVDIDAD (217 aa). A G1 region spans residues 33 to 40; sequence GSVDDGKS. A GTP-binding site is contributed by 33 to 40; it reads GSVDDGKS. A G2 region spans residues 91–95; that stretch reads GITID. The G3 stretch occupies residues 112-115; sequence DTPG. GTP-binding positions include 112 to 116 and 167 to 170; these read DTPGH and NKMD. The tract at residues 167 to 170 is G4; it reads NKMD. Residues 206 to 208 form a G5 region; the sequence is SAL.

It belongs to the TRAFAC class translation factor GTPase superfamily. Classic translation factor GTPase family. CysN/NodQ subfamily. In terms of assembly, heterodimer composed of CysD, the smaller subunit, and CysN.

The enzyme catalyses sulfate + ATP + H(+) = adenosine 5'-phosphosulfate + diphosphate. It functions in the pathway sulfur metabolism; hydrogen sulfide biosynthesis; sulfite from sulfate: step 1/3. Functionally, with CysD forms the ATP sulfurylase (ATPS) that catalyzes the adenylation of sulfate producing adenosine 5'-phosphosulfate (APS) and diphosphate, the first enzymatic step in sulfur assimilation pathway. APS synthesis involves the formation of a high-energy phosphoric-sulfuric acid anhydride bond driven by GTP hydrolysis by CysN coupled to ATP hydrolysis by CysD. This chain is Sulfate adenylyltransferase subunit 1, found in Aliivibrio fischeri (strain ATCC 700601 / ES114) (Vibrio fischeri).